Consider the following 128-residue polypeptide: D-ribose pyranase (128 aa).

The active-site Proton donor is the histidine 20. Residues aspartate 28, histidine 95, and 117–119 contribute to the substrate site; that span reads YSN.

This sequence belongs to the RbsD / FucU family. RbsD subfamily. As to quaternary structure, homodecamer.

It localises to the cytoplasm. It carries out the reaction beta-D-ribopyranose = beta-D-ribofuranose. It functions in the pathway carbohydrate metabolism; D-ribose degradation; D-ribose 5-phosphate from beta-D-ribopyranose: step 1/2. Catalyzes the interconversion of beta-pyran and beta-furan forms of D-ribose. The chain is D-ribose pyranase from Thermosipho africanus (strain TCF52B).